A 440-amino-acid polypeptide reads, in one-letter code: Glutamate--tRNA ligase 2 (440 aa).

The short motif at 8–18 (PSPTGYLHVGN) is the 'HIGH' region element. Residues 239–243 (ALSKR) carry the 'KMSKS' region motif. Lys-242 lines the ATP pocket.

It belongs to the class-I aminoacyl-tRNA synthetase family. Glutamate--tRNA ligase type 1 subfamily. Monomer.

The protein localises to the cytoplasm. It carries out the reaction tRNA(Glu) + L-glutamate + ATP = L-glutamyl-tRNA(Glu) + AMP + diphosphate. Catalyzes the attachment of glutamate to tRNA(Glu) in a two-step reaction: glutamate is first activated by ATP to form Glu-AMP and then transferred to the acceptor end of tRNA(Glu). This Dinoroseobacter shibae (strain DSM 16493 / NCIMB 14021 / DFL 12) protein is Glutamate--tRNA ligase 2.